The primary structure comprises 387 residues: Dual specificity mitogen-activated protein kinase kinase mek-2 (387 aa).

Residues 1 to 37 (MSSGKRRNPLGLSLPPTVNEQSESGEATAEEATATVP) are disordered. A compositionally biased stretch (polar residues) spans 16-25 (PTVNEQSESG). The span at 26 to 35 (EATAEEATAT) shows a compositional bias: low complexity. The 288-residue stretch at 73 to 360 (LQTEGELGHG…LKSLTADVFF (288 aa)) folds into the Protein kinase domain. ATP contacts are provided by residues 79–87 (LGHGNGGVV) and Lys-102. The active-site Proton acceptor is the Asp-195. Phosphoserine is present on residues Ser-223 and Ser-227.

The protein belongs to the protein kinase superfamily. STE Ser/Thr protein kinase family. MAP kinase kinase subfamily. Interacts with ksr-1.

It carries out the reaction L-seryl-[protein] + ATP = O-phospho-L-seryl-[protein] + ADP + H(+). It catalyses the reaction L-threonyl-[protein] + ATP = O-phospho-L-threonyl-[protein] + ADP + H(+). The enzyme catalyses L-tyrosyl-[protein] + ATP = O-phospho-L-tyrosyl-[protein] + ADP + H(+). With respect to regulation, activated by tyrosine and threonine phosphorylation catalyzed by MAP kinase kinase kinases. Its function is as follows. Functions in the let-60 Ras signaling pathway; acts downstream of lin-45 raf kinase, but before the sur-1/mpk-1 gene product in controlling vulval cell differentiation. Required for progression of developing oocytes through the pachytene stage. Plays a role in responses to M.nematophilum-mediated bacterial infection by promoting tail swelling and preventing constipation. Involved in fluid homeostasis. Positively regulates lifespan upstream of mpk-1. This Caenorhabditis elegans protein is Dual specificity mitogen-activated protein kinase kinase mek-2 (mek-2).